Here is a 266-residue protein sequence, read N- to C-terminus: GTP cyclohydrolase MptA (266 aa).

The protein belongs to the GTP cyclohydrolase IV family. As to quaternary structure, homodimer. It depends on Fe(2+) as a cofactor.

It carries out the reaction GTP + H2O = 7,8-dihydroneopterin 2',3'-cyclic phosphate + formate + diphosphate + H(+). It functions in the pathway cofactor biosynthesis; 5,6,7,8-tetrahydromethanopterin biosynthesis. Converts GTP to 7,8-dihydro-D-neopterin 2',3'-cyclic phosphate, the first intermediate in the biosynthesis of coenzyme methanopterin. This chain is GTP cyclohydrolase MptA, found in Pyrococcus abyssi (strain GE5 / Orsay).